A 204-amino-acid chain; its full sequence is Imidazoleglycerol-phosphate dehydratase (204 aa).

The protein belongs to the imidazoleglycerol-phosphate dehydratase family.

The protein resides in the cytoplasm. The catalysed reaction is D-erythro-1-(imidazol-4-yl)glycerol 3-phosphate = 3-(imidazol-4-yl)-2-oxopropyl phosphate + H2O. It participates in amino-acid biosynthesis; L-histidine biosynthesis; L-histidine from 5-phospho-alpha-D-ribose 1-diphosphate: step 6/9. This is Imidazoleglycerol-phosphate dehydratase from Corynebacterium urealyticum (strain ATCC 43042 / DSM 7109).